A 563-amino-acid polypeptide reads, in one-letter code: Arginine--tRNA ligase (563 aa).

A 'HIGH' region motif is present at residues 121 to 131; it reads PNIAKPMSMGH.

This sequence belongs to the class-I aminoacyl-tRNA synthetase family. In terms of assembly, monomer.

Its subcellular location is the cytoplasm. It carries out the reaction tRNA(Arg) + L-arginine + ATP = L-arginyl-tRNA(Arg) + AMP + diphosphate. This chain is Arginine--tRNA ligase, found in Leuconostoc mesenteroides subsp. mesenteroides (strain ATCC 8293 / DSM 20343 / BCRC 11652 / CCM 1803 / JCM 6124 / NCDO 523 / NBRC 100496 / NCIMB 8023 / NCTC 12954 / NRRL B-1118 / 37Y).